A 121-amino-acid polypeptide reads, in one-letter code: Large ribosomal subunit protein bL21c (121 aa).

Belongs to the bacterial ribosomal protein bL21 family. In terms of assembly, part of the 50S ribosomal subunit.

The protein localises to the plastid. It is found in the chloroplast. Its function is as follows. This protein binds to 23S rRNA. The chain is Large ribosomal subunit protein bL21c from Chaetosphaeridium globosum (Charophycean green alga).